Consider the following 452-residue polypeptide: tRNA(Ile)-lysidine synthase (452 aa).

An ATP-binding site is contributed by 27-32 (SGGIDS).

This sequence belongs to the tRNA(Ile)-lysidine synthase family.

It is found in the cytoplasm. The enzyme catalyses cytidine(34) in tRNA(Ile2) + L-lysine + ATP = lysidine(34) in tRNA(Ile2) + AMP + diphosphate + H(+). In terms of biological role, ligates lysine onto the cytidine present at position 34 of the AUA codon-specific tRNA(Ile) that contains the anticodon CAU, in an ATP-dependent manner. Cytidine is converted to lysidine, thus changing the amino acid specificity of the tRNA from methionine to isoleucine. This Persephonella marina (strain DSM 14350 / EX-H1) protein is tRNA(Ile)-lysidine synthase.